Here is a 289-residue protein sequence, read N- to C-terminus: Shikimate dehydrogenase (NADP(+)) (289 aa).

Residues 19-21 (SLS) and threonine 66 contribute to the shikimate site. The active-site Proton acceptor is the lysine 70. Residues asparagine 91 and aspartate 106 each coordinate shikimate. NADP(+)-binding positions include 131–135 (GNGGA) and leucine 229. Tyrosine 231 is a shikimate binding site. Glycine 252 contacts NADP(+).

The protein belongs to the shikimate dehydrogenase family. In terms of assembly, homodimer.

The enzyme catalyses shikimate + NADP(+) = 3-dehydroshikimate + NADPH + H(+). The protein operates within metabolic intermediate biosynthesis; chorismate biosynthesis; chorismate from D-erythrose 4-phosphate and phosphoenolpyruvate: step 4/7. Its function is as follows. Involved in the biosynthesis of the chorismate, which leads to the biosynthesis of aromatic amino acids. Catalyzes the reversible NADPH linked reduction of 3-dehydroshikimate (DHSA) to yield shikimate (SA). This chain is Shikimate dehydrogenase (NADP(+)), found in Trichormus variabilis (strain ATCC 29413 / PCC 7937) (Anabaena variabilis).